Reading from the N-terminus, the 158-residue chain is Low molecular weight phosphotyrosine protein phosphatase (158 aa).

At alanine 2 the chain carries N-acetylalanine. Cysteine 13 functions as the Nucleophile in the catalytic mechanism. Arginine 19 is a catalytic residue. Aspartate 130 (proton donor) is an active-site residue. Phosphotyrosine occurs at positions 132 and 133.

It belongs to the low molecular weight phosphotyrosine protein phosphatase family. In terms of assembly, interacts with EPHA2; dephosphorylates EPHA2. Interacts with EPHB1. Interacts with the SH3 domain of SPTAN1. Phosphorylated by LCK. Phosphorylation at Tyr-132 increases its phosphatase activity.

The protein resides in the cytoplasm. It carries out the reaction O-phospho-L-tyrosyl-[protein] + H2O = L-tyrosyl-[protein] + phosphate. The catalysed reaction is a phosphate monoester + H2O = an alcohol + phosphate. With respect to regulation, inhibited by sulfhydryl reagents. Functionally, acts on tyrosine phosphorylated proteins, low-MW aryl phosphates and natural and synthetic acyl phosphates with differences in substrate specificity between isoform 1 and isoform 2. This chain is Low molecular weight phosphotyrosine protein phosphatase (ACP1), found in Sus scrofa (Pig).